Consider the following 133-residue polypeptide: ATP synthase epsilon chain, chloroplastic (133 aa).

Belongs to the ATPase epsilon chain family. F-type ATPases have 2 components, CF(1) - the catalytic core - and CF(0) - the membrane proton channel. CF(1) has five subunits: alpha(3), beta(3), gamma(1), delta(1), epsilon(1). CF(0) has three main subunits: a, b and c.

It is found in the plastid. The protein localises to the chloroplast thylakoid membrane. Functionally, produces ATP from ADP in the presence of a proton gradient across the membrane. This chain is ATP synthase epsilon chain, chloroplastic, found in Eucalyptus globulus subsp. globulus (Tasmanian blue gum).